Consider the following 2967-residue polypeptide: BEACH domain-containing protein lvsD (2967 aa).

Disordered stretches follow at residues Met-1–Gly-25, Asn-322–Ser-364, Ile-588–Leu-615, Asn-917–Asn-936, Gly-1077–Asp-1105, Asn-1173–Arg-1220, Asn-1583–Asn-1613, Gln-1831–Val-1859, Pro-1921–Asn-2009, and Lys-2029–Asn-2062. The BEACH 1 domain occupies Met-229 to Tyr-491. Residues Ser-1079–Asn-1092 show a composition bias toward low complexity. Over residues Asn-1093–Asp-1105 the composition is skewed to basic and acidic residues. Low complexity-rich tracts occupy residues Pro-1185–Ser-1194, Asn-1583–Asn-1611, Gln-1831–Ser-1857, Gln-1926–Asn-1980, Asn-1993–Thr-2006, and Ser-2034–Asn-2062. In terms of domain architecture, BEACH-type PH spans Asn-2060 to Gly-2162. BEACH domains are found at residues Thr-2202 to Arg-2492 and Asn-2628 to Asn-2785. WD repeat units lie at residues Asn-2658–His-2710 and Gly-2720–Gln-2761. 2 disordered regions span residues Ser-2798–Thr-2820 and Pro-2915–Asn-2934. 2 stretches are compositionally biased toward low complexity: residues Ser-2811–Thr-2820 and Asn-2924–Asn-2934.

The chain is BEACH domain-containing protein lvsD (lvsD) from Dictyostelium discoideum (Social amoeba).